A 489-amino-acid polypeptide reads, in one-letter code: Putative ATP-dependent RNA helicase T26G10.1 (489 aa).

Residues 44–72 (KSFAELGVSQPLCDACQRLGWMKPSKIQQ) carry the Q motif motif. Positions 75–246 (LPHALQGKDV…RASLRDPARV (172 aa)) constitute a Helicase ATP-binding domain. 88 to 95 (AETGSGKT) serves as a coordination point for ATP. The DEAD box signature appears at 194-197 (DEAD). The 161-residue stretch at 257–417 (NLKQHYIFVP…EYKCVENEVM (161 aa)) folds into the Helicase C-terminal domain. The tract at residues 433–489 (EMKEMDEKKKSGKKRRQNDDFGDTEESGGRFKMGIKSMGGRGGSGGGRGGKKKKMSK) is disordered. The segment covering 469 to 480 (SMGGRGGSGGGR) has biased composition (gly residues).

Belongs to the DEAD box helicase family. DDX47/RRP3 subfamily.

The protein localises to the nucleus. The catalysed reaction is ATP + H2O = ADP + phosphate + H(+). In terms of biological role, probable ATP-dependent RNA helicase which may be involved in ribosome biogenesis. This chain is Putative ATP-dependent RNA helicase T26G10.1, found in Caenorhabditis elegans.